Here is a 339-residue protein sequence, read N- to C-terminus: Fructose-1,6-bisphosphatase class 1 (339 aa).

Positions 94, 116, 118, and 119 each coordinate Mg(2+). Residues 119 to 122 (DGSS), asparagine 210, and lysine 276 contribute to the substrate site. Glutamate 282 lines the Mg(2+) pocket.

It belongs to the FBPase class 1 family. Homotetramer. The cofactor is Mg(2+).

Its subcellular location is the cytoplasm. The enzyme catalyses beta-D-fructose 1,6-bisphosphate + H2O = beta-D-fructose 6-phosphate + phosphate. It participates in carbohydrate biosynthesis; gluconeogenesis. This chain is Fructose-1,6-bisphosphatase class 1, found in Burkholderia ambifaria (strain MC40-6).